We begin with the raw amino-acid sequence, 296 residues long: ATP phosphoribosyltransferase (296 aa).

It belongs to the ATP phosphoribosyltransferase family. Long subfamily. Mg(2+) serves as cofactor.

The protein resides in the cytoplasm. It carries out the reaction 1-(5-phospho-beta-D-ribosyl)-ATP + diphosphate = 5-phospho-alpha-D-ribose 1-diphosphate + ATP. The protein operates within amino-acid biosynthesis; L-histidine biosynthesis; L-histidine from 5-phospho-alpha-D-ribose 1-diphosphate: step 1/9. With respect to regulation, feedback inhibited by histidine. In terms of biological role, catalyzes the condensation of ATP and 5-phosphoribose 1-diphosphate to form N'-(5'-phosphoribosyl)-ATP (PR-ATP). Has a crucial role in the pathway because the rate of histidine biosynthesis seems to be controlled primarily by regulation of HisG enzymatic activity. The protein is ATP phosphoribosyltransferase of Halorubrum lacusprofundi (strain ATCC 49239 / DSM 5036 / JCM 8891 / ACAM 34).